We begin with the raw amino-acid sequence, 108 residues long: Pyrimidine/purine nucleoside phosphorylase (108 aa).

Belongs to the nucleoside phosphorylase PpnP family.

The catalysed reaction is a purine D-ribonucleoside + phosphate = a purine nucleobase + alpha-D-ribose 1-phosphate. It catalyses the reaction adenosine + phosphate = alpha-D-ribose 1-phosphate + adenine. It carries out the reaction cytidine + phosphate = cytosine + alpha-D-ribose 1-phosphate. The enzyme catalyses guanosine + phosphate = alpha-D-ribose 1-phosphate + guanine. The catalysed reaction is inosine + phosphate = alpha-D-ribose 1-phosphate + hypoxanthine. It catalyses the reaction thymidine + phosphate = 2-deoxy-alpha-D-ribose 1-phosphate + thymine. It carries out the reaction uridine + phosphate = alpha-D-ribose 1-phosphate + uracil. The enzyme catalyses xanthosine + phosphate = alpha-D-ribose 1-phosphate + xanthine. In terms of biological role, catalyzes the phosphorolysis of diverse nucleosides, yielding D-ribose 1-phosphate and the respective free bases. Can use uridine, adenosine, guanosine, cytidine, thymidine, inosine and xanthosine as substrates. Also catalyzes the reverse reactions. In Polaromonas sp. (strain JS666 / ATCC BAA-500), this protein is Pyrimidine/purine nucleoside phosphorylase.